Reading from the N-terminus, the 69-residue chain is uncharacterized protein (69 aa).

The signal sequence occupies residues 1-16 (MKKIMLFLAMTSILSA). The N-palmitoyl cysteine moiety is linked to residue cysteine 17. Cysteine 17 carries S-diacylglycerol cysteine lipidation.

The protein resides in the cell membrane. This is an uncharacterized protein from Bacillus subtilis (strain 168).